Consider the following 50-residue polypeptide: Large ribosomal subunit protein bL33A (50 aa).

Belongs to the bacterial ribosomal protein bL33 family.

In Streptococcus thermophilus (strain CNRZ 1066), this protein is Large ribosomal subunit protein bL33A.